Consider the following 441-residue polypeptide: Cysteine proteinase (441 aa).

Cysteine 249 and cysteine 290 are oxidised to a cystine. Residue cysteine 252 is part of the active site. N-linked (GlcNAc...) asparagine glycans are attached at residues asparagine 270 and asparagine 345. Residues histidine 381 and asparagine 403 contribute to the active site.

The protein belongs to the peptidase C1 family.

This is Cysteine proteinase (TACP) from Theileria annulata.